A 375-amino-acid chain; its full sequence is GTPase HflX (375 aa).

Positions 194 to 371 (PHIAIVGYAS…RIATLLAGTK (178 aa)) constitute a Hflx-type G domain. Residues 200 to 207 (GYASAGKT), 225 to 229 (FTTIT), 246 to 249 (DTVG), 314 to 317 (NKID), and 349 to 351 (SAK) each bind GTP. Residues T207 and T227 each coordinate Mg(2+).

It belongs to the TRAFAC class OBG-HflX-like GTPase superfamily. HflX GTPase family. In terms of assembly, monomer. Associates with the 50S ribosomal subunit. Mg(2+) is required as a cofactor.

The protein localises to the cytoplasm. In terms of biological role, GTPase that associates with the 50S ribosomal subunit and may have a role during protein synthesis or ribosome biogenesis. This Hyperthermus butylicus (strain DSM 5456 / JCM 9403 / PLM1-5) protein is GTPase HflX.